We begin with the raw amino-acid sequence, 729 residues long: Palmitoyltransferase akr1 (729 aa).

Basic and acidic residues predominate over residues 1 to 11 (MVHHDGADAHA). The disordered stretch occupies residues 1–28 (MVHHDGADAHAGHAAPAQPPMKSDTATP). The Cytoplasmic segment spans residues 1–297 (MVHHDGADAH…DRRSFMTKFT (297 aa)). ANK repeat units lie at residues 76–105 (EGITPLHWAAINNQYAMCKFLIDKGAEINK), 110–139 (SVATPLQWAAQRCHYYTVHLLLQHGADPLI), 143–172 (QGYNTLHISTFNGNVLLIVLLLHQGIPVDV), 176–205 (YGHTALMWSAYKGFPACVDVFLRWGASVHA), and 209–238 (QGFTALHWALVKGSPGCIQKLIEYGADRFA). 2 helical membrane-spanning segments follow: residues 298–318 (FLWPFVMVWATMVVMAGMPVF) and 319–339 (VGIPLGVLAGYAVQWVAQQVI). The Cytoplasmic segment spans residues 340-354 (AYAPPDMRQLQKTPW). The chain crosses the membrane as a helical span at residues 355 to 375 (MAGIFAGSLFLCIMNWLLHIF). Topologically, residues 376 to 383 (GSTMFGQD) are lumenal. Residues 384–404 (SAVIPNLLFAFFISMTIWFYI) traverse the membrane as a helical segment. The Cytoplasmic segment spans residues 405 to 483 (RCMVDDPGFV…YNCIGVNNHR (79 aa)). One can recognise a DHHC domain in the interval 440 to 490 (NFCVTCMIRTPLRSKHCRRCQRCVAKHDHHCPWVYNCIGVNNHRHFFFYLI). C470 functions as the S-palmitoyl cysteine intermediate in the catalytic mechanism. The chain crosses the membrane as a helical span at residues 484-504 (HFFFYLINLTLSVVTYDWLTY). Over 505–534 (RYLSTLSETASDECNILAPSLCRIVNADTY) the chain is Lumenal. The helical transmembrane segment at 535–555 (SLLTAIWASLQLTWVSMLLFV) threads the bilayer. Over 556–729 (QFVQVSSAMT…GYESVAGEEV (174 aa)) the chain is Cytoplasmic. Disordered stretches follow at residues 587–620 (STGAPLNPPSLPAPGPSPAAGGARHGGRHAHGHN) and 709–729 (TSGGGGRRRGGGYESVAGEEV). The span at 592–603 (LNPPSLPAPGPS) shows a compositional bias: pro residues. Residues 611–620 (HGGRHAHGHN) show a composition bias toward basic residues.

This sequence belongs to the DHHC palmitoyltransferase family. AKR/ZDHHC17 subfamily.

It is found in the early endosome membrane. The protein localises to the golgi apparatus membrane. It catalyses the reaction L-cysteinyl-[protein] + hexadecanoyl-CoA = S-hexadecanoyl-L-cysteinyl-[protein] + CoA. Its function is as follows. Palmitoyltransferase specific for casein kinase 1. The polypeptide is Palmitoyltransferase akr1 (ptr-1) (Neurospora crassa (strain ATCC 24698 / 74-OR23-1A / CBS 708.71 / DSM 1257 / FGSC 987)).